A 508-amino-acid polypeptide reads, in one-letter code: Aldehyde dehydrogenase family 7 member B4 (508 aa).

Residue 244–249 (GSSRVG) participates in NAD(+) binding. Catalysis depends on glutamate 266, which acts as the Proton acceptor. The active-site Nucleophile is the cysteine 300.

This sequence belongs to the aldehyde dehydrogenase family. In terms of assembly, homotetramer.

The enzyme catalyses an aldehyde + NAD(+) + H2O = a carboxylate + NADH + 2 H(+). In Arabidopsis thaliana (Mouse-ear cress), this protein is Aldehyde dehydrogenase family 7 member B4 (ALDH7B4).